Here is a 447-residue protein sequence, read N- to C-terminus: Argininosuccinate lyase (447 aa).

The protein belongs to the lyase 1 family. Argininosuccinate lyase subfamily.

Its subcellular location is the cytoplasm. It catalyses the reaction 2-(N(omega)-L-arginino)succinate = fumarate + L-arginine. The protein operates within amino-acid biosynthesis; L-arginine biosynthesis; L-arginine from L-ornithine and carbamoyl phosphate: step 3/3. The polypeptide is Argininosuccinate lyase (Bacteroides fragilis (strain ATCC 25285 / DSM 2151 / CCUG 4856 / JCM 11019 / LMG 10263 / NCTC 9343 / Onslow / VPI 2553 / EN-2)).